Here is a 122-residue protein sequence, read N- to C-terminus: Large ribosomal subunit protein uL14 (122 aa).

It belongs to the universal ribosomal protein uL14 family. As to quaternary structure, part of the 50S ribosomal subunit. Forms a cluster with proteins L3 and L19. In the 70S ribosome, L14 and L19 interact and together make contacts with the 16S rRNA in bridges B5 and B8.

Its function is as follows. Binds to 23S rRNA. Forms part of two intersubunit bridges in the 70S ribosome. The sequence is that of Large ribosomal subunit protein uL14 from Mycobacteroides abscessus (strain ATCC 19977 / DSM 44196 / CCUG 20993 / CIP 104536 / JCM 13569 / NCTC 13031 / TMC 1543 / L948) (Mycobacterium abscessus).